A 318-amino-acid chain; its full sequence is MLHHHCRRNPELQEELQIQAAVAAGDVHTVRKMLEQGYSPNGRDANGWTLLHFSAARGKERCVRVFLEHGADPTVKDLIGGFTALHYAAMHGRARIARLMLESEYRSDIINAKSNDGWTPLHVAAHYGRDSFVRLLLEFKAEVDPLSDKGTTPLQLAIIRERSSCVKILLDHNANIDIQNGFLLRYAVIKSNHSYCRMFLQRGADTDLGRLEDGQTPLHLSALRDDVLCARMLYNYGADTNTRNYEGQTPLAVSISISGSSRPCLDFLQEVTRQPRNLQDLCRIKIRQCIGLQNLKLLDELPIAKVMKDYLKHKFDDI.

7 ANK repeats span residues Q13–G42, N46–V75, G80–I109, D116–P145, K149–I178, N180–L208, and D213–T242. Positions L265 to I318 constitute an SOCS box domain.

This sequence belongs to the ankyrin SOCS box (ASB) family. Interacts with CUL5. Interacts with RNF7. Interacts with PSRC1.

It functions in the pathway protein modification; protein ubiquitination. Functionally, probable substrate-recognition component of a SCF-like ECS (Elongin-Cullin-SOCS-box protein) E3 ubiquitin-protein ligase complex which mediates the ubiquitination and subsequent proteasomal degradation of target proteins. Plays a role in spindle dynamics and genome integrity by targeting the mitotic progression protein PSRC1 for proteasomal degradation in a cell cycle-dependent manner. Also participates in meiosis by mediating the proper attachment between kinetochores and microtubules. In Macaca fascicularis (Crab-eating macaque), this protein is Ankyrin repeat and SOCS box protein 7 (ASB7).